An 824-amino-acid polypeptide reads, in one-letter code: Leucine--tRNA ligase (824 aa).

The 'HIGH' region motif lies at 42 to 52 (PYPSGRIHMGH). A 'KMSKS' region motif is present at residues 581–585 (KMSKS). Lys584 contributes to the ATP binding site.

It belongs to the class-I aminoacyl-tRNA synthetase family.

The protein resides in the cytoplasm. It catalyses the reaction tRNA(Leu) + L-leucine + ATP = L-leucyl-tRNA(Leu) + AMP + diphosphate. In Geobacter sulfurreducens (strain ATCC 51573 / DSM 12127 / PCA), this protein is Leucine--tRNA ligase.